The sequence spans 242 residues: Dihydropteridine reductase (242 aa).

12–36 is a binding site for NADP(+); the sequence is LVYGGRGALGSRCVQAFRARNWWVA. Residues Lys71, Lys77, Lys94, and Lys100 each carry the N6-succinyllysine modification. The active-site Proton acceptor is the Tyr148.

The protein belongs to the short-chain dehydrogenases/reductases (SDR) family. In terms of assembly, homodimer.

It catalyses the reaction 5,6,7,8-tetrahydropteridine + NAD(+) = 6,7-dihydropteridine + NADH + H(+). It carries out the reaction 5,6,7,8-tetrahydropteridine + NADP(+) = 6,7-dihydropteridine + NADPH + H(+). Functionally, catalyzes the conversion of quinonoid dihydrobiopterin into tetrahydrobiopterin. This Bos taurus (Bovine) protein is Dihydropteridine reductase (QDPR).